The following is a 319-amino-acid chain: V-set and transmembrane domain-containing protein 4 (319 aa).

The signal sequence occupies residues 1 to 23 (MRLRLLALAAAVLLGPAPEVCGA). One can recognise an Ig-like domain in the interval 24–154 (LNVTVSPGPV…SSATEMRVIS (131 aa)). 2 N-linked (GlcNAc...) asparagine glycosylation sites follow: Asn25 and Asn41. An intrachain disulfide couples Cys46 to Cys126. Asn143 is a glycosylation site (N-linked (GlcNAc...) asparagine). Residues 180-200 (AVLVCCVGILSVLLFTLVIAW) traverse the membrane as a helical segment.

Post-translationally, proteolytically cleaved to generate a bioactive peptide. Peptide Lv is widely expressed in various tissues and the central nervous system, including the retinal photoreceptor layer, hippocampus, olfactory bulb, and cerebellum.

It is found in the cell membrane. Its subcellular location is the secreted. In terms of biological role, peptide Lv enhances L-type voltage-gated calcium channel (L-VGCC) currents in retinal photoreceptors. The chain is V-set and transmembrane domain-containing protein 4 (Vstm4) from Mus musculus (Mouse).